A 191-amino-acid chain; its full sequence is Ribosomal RNA small subunit methyltransferase G (191 aa).

S-adenosyl-L-methionine-binding positions include Gly62, Leu67, 111-112 (IE), and Arg124.

The protein belongs to the methyltransferase superfamily. RNA methyltransferase RsmG family.

It localises to the cytoplasm. The enzyme catalyses guanosine(527) in 16S rRNA + S-adenosyl-L-methionine = N(7)-methylguanosine(527) in 16S rRNA + S-adenosyl-L-homocysteine. In terms of biological role, specifically methylates the N7 position of guanine in position 527 of 16S rRNA. The polypeptide is Ribosomal RNA small subunit methyltransferase G (Rickettsia rickettsii (strain Sheila Smith)).